Consider the following 458-residue polypeptide: Serine--tRNA ligase (458 aa).

Position 255–257 (255–257 (TSE)) interacts with L-serine. ATP-binding positions include 286–288 (RKE) and V302. Residue E309 coordinates L-serine. ATP is bound at residue 373–376 (ELVS). T409 lines the L-serine pocket.

It belongs to the class-II aminoacyl-tRNA synthetase family. Type-1 seryl-tRNA synthetase subfamily. Homodimer. The tRNA molecule binds across the dimer.

The protein localises to the cytoplasm. It carries out the reaction tRNA(Ser) + L-serine + ATP = L-seryl-tRNA(Ser) + AMP + diphosphate + H(+). It catalyses the reaction tRNA(Sec) + L-serine + ATP = L-seryl-tRNA(Sec) + AMP + diphosphate + H(+). Its pathway is aminoacyl-tRNA biosynthesis; selenocysteinyl-tRNA(Sec) biosynthesis; L-seryl-tRNA(Sec) from L-serine and tRNA(Sec): step 1/1. In terms of biological role, catalyzes the attachment of serine to tRNA(Ser). Is also able to aminoacylate tRNA(Sec) with serine, to form the misacylated tRNA L-seryl-tRNA(Sec), which will be further converted into selenocysteinyl-tRNA(Sec). The polypeptide is Serine--tRNA ligase (Ignicoccus hospitalis (strain KIN4/I / DSM 18386 / JCM 14125)).